Here is a 575-residue protein sequence, read N- to C-terminus: Serine/threonine-protein kinase YPK1 (575 aa).

A disordered region spans residues 1–53 (MMSWKFGKKFKEGGFLSGKHHSSNNNSPSDTSRSTTPTPGNPHPEDAVKPPVP). A compositionally biased stretch (low complexity) spans 23–38 (SNNNSPSDTSRSTTPT). The Protein kinase domain maps to 245–500 (FELLKVIGKG…AQDIKNHPFF (256 aa)). Residues 251 to 259 (IGKGSFGKV) and Lys-274 each bind ATP. Catalysis depends on Asp-368, which acts as the Proton acceptor. Positions 502–573 (KHINFTKLWN…SVSPLGESVG (72 aa)) constitute an AGC-kinase C-terminal domain. Ser-543 and Ser-562 each carry phosphoserine.

This sequence belongs to the protein kinase superfamily. AGC Ser/Thr protein kinase family. RAC subfamily.

The enzyme catalyses L-seryl-[protein] + ATP = O-phospho-L-seryl-[protein] + ADP + H(+). The catalysed reaction is L-threonyl-[protein] + ATP = O-phospho-L-threonyl-[protein] + ADP + H(+). In terms of biological role, probable serine/threonine-protein kinase which may act in the sphingolipid-mediated signaling pathway. May act downstream of TORC2 (TOR complex 2) and PDK1 to regulate sphingolipid metabolism. This is Serine/threonine-protein kinase YPK1 from Cryptococcus neoformans var. grubii serotype A (strain H99 / ATCC 208821 / CBS 10515 / FGSC 9487) (Filobasidiella neoformans var. grubii).